A 505-amino-acid chain; its full sequence is Putative thymidine phosphorylase (505 aa).

Belongs to the thymidine/pyrimidine-nucleoside phosphorylase family. Type 2 subfamily.

The catalysed reaction is thymidine + phosphate = 2-deoxy-alpha-D-ribose 1-phosphate + thymine. This Tolumonas auensis (strain DSM 9187 / NBRC 110442 / TA 4) protein is Putative thymidine phosphorylase.